We begin with the raw amino-acid sequence, 657 residues long: Glycogen debranching enzyme (657 aa).

Catalysis depends on Asp-336, which acts as the Nucleophile. Glu-371 acts as the Proton donor in catalysis. Residues 458 to 467 (NEANGEENRD) show a composition bias toward basic and acidic residues. A disordered region spans residues 458–479 (NEANGEENRDGTNNNYSNNHGK).

The protein belongs to the glycosyl hydrolase 13 family.

The enzyme catalyses Hydrolysis of (1-&gt;6)-alpha-D-glucosidic linkages to branches with degrees of polymerization of three or four glucose residues in limit dextrin.. Its pathway is glycan degradation; glycogen degradation. Functionally, removes maltotriose and maltotetraose chains that are attached by 1,6-alpha-linkage to the limit dextrin main chain, generating a debranched limit dextrin. In Escherichia coli (strain SE11), this protein is Glycogen debranching enzyme.